The chain runs to 306 residues: UDP-3-O-acyl-N-acetylglucosamine deacetylase (306 aa).

Zn(2+) contacts are provided by histidine 79, histidine 238, and aspartate 242. Histidine 265 functions as the Proton donor in the catalytic mechanism.

The protein belongs to the LpxC family. Zn(2+) is required as a cofactor.

It carries out the reaction a UDP-3-O-[(3R)-3-hydroxyacyl]-N-acetyl-alpha-D-glucosamine + H2O = a UDP-3-O-[(3R)-3-hydroxyacyl]-alpha-D-glucosamine + acetate. It functions in the pathway glycolipid biosynthesis; lipid IV(A) biosynthesis; lipid IV(A) from (3R)-3-hydroxytetradecanoyl-[acyl-carrier-protein] and UDP-N-acetyl-alpha-D-glucosamine: step 2/6. Functionally, catalyzes the hydrolysis of UDP-3-O-myristoyl-N-acetylglucosamine to form UDP-3-O-myristoylglucosamine and acetate, the committed step in lipid A biosynthesis. This chain is UDP-3-O-acyl-N-acetylglucosamine deacetylase, found in Idiomarina loihiensis (strain ATCC BAA-735 / DSM 15497 / L2-TR).